Here is a 93-residue protein sequence, read N- to C-terminus: MKTLLLTLVVVTIVCLDLGYTTKCYVTPDVKSETCPAGQDICYTETWCDAWCTSRGKRVNLGCAATCPIVKPGVEIKCCSTDNCNPFPTRKRP.

The signal sequence occupies residues 1-21 (MKTLLLTLVVVTIVCLDLGYT). Disulfide bonds link C24–C42, C35–C63, C48–C52, C67–C78, and C79–C84.

This sequence belongs to the three-finger toxin family. Long-chain subfamily. Type II alpha-neurotoxin sub-subfamily. As to expression, expressed by the venom gland.

The protein resides in the secreted. Its function is as follows. Binds to muscular and neuronal nicotinic acetylcholine receptor (nAChR) and inhibits acetylcholine from binding to the receptor, thereby impairing neuromuscular and neuronal transmission. Pseudo-irreversibly inhibits twitches in chick biventer cervicis nerve-muscle preparations in a concentration-dependent manner. This Ophiophagus hannah (King cobra) protein is Alpha-elapitoxin-Oh3a.